A 987-amino-acid polypeptide reads, in one-letter code: MSTSSMKSQDSNGLRERINNGSATNDDNMTARCGSEPPSEDFELDKDKKTFGRTPDGTIFTVPQTHDMVSQLLDPRQPKNLSDLIVLVILALHIFALYALPSSLKRPVFAVIFLFWRGCYNVGIGYLLHIQSHHKRIVAWAKKWNLFENPVTGKNPRPWLYQLIKTELETKIPEDYKFEQAPIEYNTWLVFRRVVDLILMCDFTSYCLFAIACGGAPSDEGLVMSTLRWGAGIILVLFNLWVKLDAHRVVKDYAWYWGDFFYLIDQELTFDGVFEMAPHPMYSVGYAGYYGISMMAASYSVLAISIVAHMAQFAFLLVVENPHIDKTYNPPPPRKHQDNPTPSDIDHANALASSKEGLEYSLDSSPTQTPPLNTTQPLAVHNLMGLGNIDLFRITDVSILLLLGYVFLITALTPSTPVYQALFVINAMFWRLWYSVGLGIILDRQSSKKMWTRHFVKYGDSTEEAWRQWKGMYHLSMTMCYASFIAATWKMYSIPSDWAYGLVLLRHVLGAGLVSLQLWTAISIYESLGEFGWFFGDFFFDHAPKLTYSGIYRYLNNPERIIGLAGIWGAVFITGSRAIFCLALLSHTLTLAFLQFVEKPHMQKLYGRNLRSEAGLSKSIKRSLPPQIKKWHGNVDRVLEETGHFVEEFLDAARPKLAAGVSTIFRDTSALFSQYPARLTLTRIAPDLAGYDPRDYSVTIEGTSSDSALHKRTTSKEGITARIPQERMDGFKPLVFEYGAPIKVKWTAPTKHSKADWIGMYMVADNASREVTRIPSAGRWVATVPNEYESSPADQGILVSNRFVSGSKRIDGSTQDYVEGEMIFEGDKLFWTQGVFEFRYHHDGKHNVMAISLPFEIRIPRFDDENSNVNITLDSDNSQSQSLIRSAVEQALLPVVRNCFDRDPDIAPNSVDESFGVLVARDGKYPRRVVHAVHFMFGIEFAPEVVRADGNVRNLAWRICNAKQVLAPYSMSHSKGTNTPDVDGEKA.

2 stretches are compositionally biased toward polar residues: residues methionine 1–asparagine 12 and asparagine 19–asparagine 28. The segment at methionine 1–aspartate 56 is disordered. The Lumenal portion of the chain corresponds to methionine 1 to aspartate 83. A helical membrane pass occupies residues leucine 84–leucine 104. Residues lysine 105 to proline 107 lie on the Cytoplasmic side of the membrane. The chain crosses the membrane as a helical span at residues valine 108–leucine 128. Over histidine 129–arginine 193 the chain is Lumenal. A helical membrane pass occupies residues valine 194–glycine 214. Over glycine 215 to glycine 221 the chain is Cytoplasmic. The helical transmembrane segment at leucine 222 to valine 242 threads the bilayer. At lysine 243 to aspartate 271 the chain is on the lumenal side. The helical transmembrane segment at glycine 272–isoleucine 292 threads the bilayer. At serine 293–serine 298 the chain is on the cytoplasmic side. The chain crosses the membrane as a helical span at residues tyrosine 299–valine 319. The Lumenal portion of the chain corresponds to glutamate 320–arginine 393. Positions threonine 327–alanine 348 are disordered. The chain crosses the membrane as a helical span at residues isoleucine 394–proline 414. Residues serine 415 to alanine 421 are Cytoplasmic-facing. Residues leucine 422–leucine 442 traverse the membrane as a helical segment. The Lumenal portion of the chain corresponds to aspartate 443 to serine 483. A helical membrane pass occupies residues phenylalanine 484–leucine 504. Residues leucine 505–histidine 507 are Cytoplasmic-facing. The chain crosses the membrane as a helical span at residues valine 508 to leucine 528. Residues glycine 529 to arginine 560 are Lumenal-facing. The chain crosses the membrane as a helical span at residues isoleucine 561–cysteine 581. Topologically, residues leucine 582–alanine 987 are cytoplasmic.

The protein belongs to the class VI-like SAM-binding methyltransferase superfamily. CHO2 family.

Its subcellular location is the endoplasmic reticulum membrane. It catalyses the reaction a 1,2-diacyl-sn-glycero-3-phosphoethanolamine + S-adenosyl-L-methionine = a 1,2-diacyl-sn-glycero-3-phospho-N-methylethanolamine + S-adenosyl-L-homocysteine + H(+). The protein operates within phospholipid metabolism; phosphatidylcholine biosynthesis. Its function is as follows. Catalyzes the first step of the methylation pathway of phosphatidylcholine biosynthesis, the SAM-dependent methylation of phosphatidylethanolamine (PE) to phosphatidylmonomethylethanolamine (PMME). The sequence is that of Phosphatidylethanolamine N-methyltransferase (CHO2) from Botryotinia fuckeliana (strain B05.10) (Noble rot fungus).